Consider the following 366-residue polypeptide: Palmitoyltransferase ZDHHC2 (366 aa).

Residues 1-15 (MAPSGSGGVRRRCRR) lie on the Cytoplasmic side of the membrane. The chain crosses the membrane as a helical span at residues 16 to 36 (VLYWIPVVFISLLLGWSYYAY). Over 37 to 47 (AIQLCIVSMEN) the chain is Lumenal. A helical transmembrane segment spans residues 48–68 (IGEQVVCLMAYHLLFAMFVWS). At 69–169 (YWKTIFTLPM…NNCVGFSNYK (101 aa)) the chain is on the cytoplasmic side. A DHHC domain is found at 126–176 (RYCDRCQLIKPDRCHHCSVCDKCILKMDHHCPWVNNCVGFSNYKFFLLFLA). Residue cysteine 156 is the S-palmitoyl cysteine intermediate of the active site. Residues 170–190 (FFLLFLAYSLLYCLFIAATDL) traverse the membrane as a helical segment. Residues 191–207 (QYFIRFWTNGLPDTQAK) lie on the Lumenal side of the membrane. A helical membrane pass occupies residues 208–228 (FHIMFLFFAAAMFSVSLSSLF). The Cytoplasmic portion of the chain corresponds to 229 to 366 (GYHCWLVSKN…NPALTMENET (138 aa)). Polar residues predominate over residues 297-316 (VNQDPEQPSTPAGLNSTVKN). Residues 297–366 (VNQDPEQPST…NPALTMENET (70 aa)) are disordered. A mediates localization to plasma membrane and recycling endosomes region spans residues 298-366 (NQDPEQPSTP…NPALTMENET (69 aa)). Residues 326-336 (PLRESQSHLLK) show a composition bias toward basic and acidic residues. The short motif at 334–335 (LL) is the Non-canonical dileucine endocytic signal element. The span at 337-347 (DSQTWTESSAN) shows a compositional bias: polar residues. Positions 357–360 (NPAL) match the NPxY-like endocytic signal motif.

This sequence belongs to the DHHC palmitoyltransferase family. In terms of assembly, monomer. Homodimer. The monomeric form has a higher catalytic activity. Post-translationally, autopalmitoylated. Expressed in all brain regions.

The protein localises to the postsynaptic density. It localises to the postsynaptic recycling endosome membrane. Its subcellular location is the cell membrane. It is found in the endoplasmic reticulum membrane. The protein resides in the golgi apparatus membrane. The catalysed reaction is L-cysteinyl-[protein] + hexadecanoyl-CoA = S-hexadecanoyl-L-cysteinyl-[protein] + CoA. It carries out the reaction L-cysteinyl-[protein] + tetradecanoyl-CoA = S-tetradecanoyl-L-cysteinyl-[protein] + CoA. It catalyses the reaction L-cysteinyl-[protein] + octadecanoyl-CoA = S-octadecanoyl-L-cysteinyl-[protein] + CoA. In terms of biological role, palmitoyltransferase that catalyzes the addition of palmitate onto various protein substrates and is involved in a variety of cellular processes. Has no stringent fatty acid selectivity and in addition to palmitate can also transfer onto target proteins myristate from tetradecanoyl-CoA and stearate from octadecanoyl-CoA. In the nervous system, plays a role in long term synaptic potentiation by palmitoylating AKAP5 through which it regulates protein trafficking from the dendritic recycling endosomes to the plasma membrane and controls both structural and functional plasticity at excitatory synapses. In dendrites, mediates the palmitoylation of DLG4 when synaptic activity decreases and induces synaptic clustering of DLG4 and associated AMPA-type glutamate receptors. Also mediates the de novo and turnover palmitoylation of RGS7BP, a shuttle for Gi/o-specific GTPase-activating proteins/GAPs, promoting its localization to the plasma membrane in response to the activation of G protein-coupled receptors. Through the localization of these GTPase-activating proteins/GAPs, it also probably plays a role in G protein-coupled receptors signaling in neurons. Also probably plays a role in cell adhesion by palmitoylating CD9 and CD151 to regulate their expression and function. Palmitoylates the endoplasmic reticulum protein CKAP4 and regulates its localization to the plasma membrane. Could also palmitoylate LCK and regulate its localization to the plasma membrane. This Mus musculus (Mouse) protein is Palmitoyltransferase ZDHHC2.